A 330-amino-acid chain; its full sequence is DNA-directed RNA polymerase subunit alpha (330 aa).

The interval 1 to 236 (MQGSVTEFLK…EQLDAFVDLR (236 aa)) is alpha N-terminal domain (alpha-NTD). The alpha C-terminal domain (alpha-CTD) stretch occupies residues 250 to 330 (FDPILLRPVD…NWPPASIAED (81 aa)).

It belongs to the RNA polymerase alpha chain family. Homodimer. The RNAP catalytic core consists of 2 alpha, 1 beta, 1 beta' and 1 omega subunit. When a sigma factor is associated with the core the holoenzyme is formed, which can initiate transcription.

The catalysed reaction is RNA(n) + a ribonucleoside 5'-triphosphate = RNA(n+1) + diphosphate. Functionally, DNA-dependent RNA polymerase catalyzes the transcription of DNA into RNA using the four ribonucleoside triphosphates as substrates. This Vibrio vulnificus (strain CMCP6) protein is DNA-directed RNA polymerase subunit alpha.